Here is a 391-residue protein sequence, read N- to C-terminus: Leucine aminopeptidase 1 (391 aa).

Positions 1 to 19 (MKLSIALALGATASTGVLA) are cleaved as a signal peptide. The propeptide occupies 20–91 (AVVPQQEPLI…YPTLHAGSYV (72 aa)). An N-linked (GlcNAc...) asparagine glycan is attached at Asn-183. Zn(2+) contacts are provided by His-191 and Asp-210. N-linked (GlcNAc...) asparagine glycosylation occurs at Asn-235. Residues Glu-249 and Asp-276 each coordinate Zn(2+). An intrachain disulfide couples Cys-325 to Cys-329. Residue His-358 participates in Zn(2+) binding.

The protein belongs to the peptidase M28 family. M28E subfamily. In terms of assembly, monomer. The cofactor is Zn(2+).

The protein localises to the secreted. Its function is as follows. Extracellular aminopeptidase that allows assimilation of proteinaceous substrates. The polypeptide is Leucine aminopeptidase 1 (lap1) (Aspergillus niger (strain ATCC MYA-4892 / CBS 513.88 / FGSC A1513)).